Here is a 536-residue protein sequence, read N- to C-terminus: Prolyl 3-hydroxylase sudestada1 (536 aa).

The disordered stretch occupies residues 1–35 (METSSSSPVKPRRKDKDEDGRAEQEDSADQVGEPH). Basic and acidic residues predominate over residues 14 to 24 (KDKDEDGRAEQ). The 111-residue stretch at 165–275 (KLDYVSASCS…RLTINGWFHG (111 aa)) folds into the Fe2OG dioxygenase domain. 2 residues coordinate Fe cation: histidine 185 and aspartate 187. Tyrosine 199 provides a ligand contact to 2-oxoglutarate. Histidine 254 is a Fe cation binding site. Position 266 (arginine 266) interacts with 2-oxoglutarate. Positions 467-486 (PTAKAPTDGRRSDYDDEEED) are disordered.

The protein belongs to the TPA1 family. As to quaternary structure, monomer. Fe(2+) serves as cofactor. The cofactor is L-ascorbate. In terms of tissue distribution, in third-instar larval tissues,highly expressed in the fat body, with significant expression in other organs including the brain, salivary glands, imaginal disks and gut.

It is found in the nucleus. It localises to the cytoplasm. It carries out the reaction [ribosomal protein uS12]-L-proline + 2-oxoglutarate + O2 = [ribosomal protein uS12]-(3S)-3-hydroxy-L-proline + succinate + CO2. In terms of biological role, prolyl 3-hydroxylase that catalyzes 3-hydroxylation of 'Pro-62' of small ribosomal subunit uS12 (RpS23), thereby regulating protein translation termination efficiency. The sequence is that of Prolyl 3-hydroxylase sudestada1 (sud1) from Drosophila melanogaster (Fruit fly).